Here is an 852-residue protein sequence, read N- to C-terminus: Lon protease homolog 2, peroxisomal (852 aa).

Ser2 is modified (N-acetylserine). Residues 13-222 (LPLLLTHEGV…MTIPLLVRQI (210 aa)) enclose the Lon N-terminal domain. 375–382 (GPPGVGKT) provides a ligand contact to ATP. Residues 651–837 (LSQPGVAIGL…DEVLNAAFDG (187 aa)) enclose the Lon proteolytic domain. Residues Ser743 and Lys786 contribute to the active site. The Microbody targeting signal motif lies at 850–852 (SKL).

The protein belongs to the peptidase S16 family. As to quaternary structure, interacts with PEX5. Interacts with TYSND1. May interact with enzymes involved in beta-oxidation of fatty acids, including ACOX1/AOX. As to expression, widely expressed, with high levels in the liver, kidney and pancreas.

It is found in the peroxisome matrix. The catalysed reaction is Hydrolysis of proteins in presence of ATP.. Functionally, ATP-dependent serine protease that mediates the selective degradation of misfolded and unassembled polypeptides in the peroxisomal matrix. Necessary for type 2 peroxisome targeting signal (PTS2)-containing protein processing and facilitates peroxisome matrix protein import. May indirectly regulate peroxisomal fatty acid beta-oxidation through degradation of the self-processed forms of TYSND1. The protein is Lon protease homolog 2, peroxisomal of Homo sapiens (Human).